The primary structure comprises 352 residues: C-C chemokine receptor type 5 (352 aa).

The Extracellular portion of the chain corresponds to Met-1–Ala-30. Tyr-3 is modified (sulfotyrosine). Ser-6 and Ser-7 each carry an O-linked (GalNAc...) serine glycan. Sulfotyrosine occurs at positions 10, 14, and 15. 2 disulfide bridges follow: Cys-20–Cys-269 and Cys-101–Cys-178. A helical transmembrane segment spans residues Arg-31–Cys-58. Residues Lys-59–Tyr-68 are Cytoplasmic-facing. Residues Leu-69–Tyr-89 traverse the membrane as a helical segment. The Extracellular segment spans residues Ala-90–Gln-102. A helical transmembrane segment spans residues Leu-103–Ile-124. Residues Asp-125 to Thr-141 are Cytoplasmic-facing. Residues Val-142–Phe-166 traverse the membrane as a helical segment. At Thr-167 to Ile-198 the chain is on the extracellular side. Residues Val-199–Leu-218 traverse the membrane as a helical segment. The Cytoplasmic segment spans residues Lys-219–Arg-235. Residues Leu-236–Phe-260 form a helical membrane-spanning segment. The Extracellular segment spans residues Gln-261–Gln-277. A helical membrane pass occupies residues Ala-278 to Gly-301. At Glu-302–Leu-352 the chain is on the cytoplasmic side. S-palmitoyl cysteine attachment occurs at residues Cys-321, Cys-323, and Cys-324. Residues Ser-336, Ser-337, Ser-342, and Ser-349 each carry the phosphoserine; by BARK1 modification.

It belongs to the G-protein coupled receptor 1 family. Interacts with PRAF2. Efficient ligand binding to CCL3/MIP-1alpha and CCL4/MIP-1beta requires sulfation, O-glycosylation and sialic acid modifications. Glycosylation on Ser-6 is required for efficient binding of CCL4. Interacts with GRK2. Interacts with ARRB1 and ARRB2. Interacts with CNIH4. Interacts with S100A4; this interaction stimulates T-lymphocyte chemotaxis. In terms of processing, sulfated on at least 2 of the N-terminal tyrosines. Sulfation is required for efficient binding of the chemokines, CCL3 and CCL4. Palmitoylation in the C-terminal is important for cell surface expression. Post-translationally, phosphorylation on serine residues in the C-terminal is stimulated by binding CC chemokines especially by APO-RANTES. In terms of processing, O-glycosylated, but not N-glycosylated. Ser-6 appears to be the major site even if Ser-7 may be also O-glycosylated. Also sialylated glycans present which contribute to chemokine binding. Thr-16 and Ser-17 may also be glycosylated and, if so, with small moieties such as a T-antigen.

The protein localises to the cell membrane. Its function is as follows. Receptor for a number of inflammatory CC-chemokines including CCL3/MIP-1-alpha, CCL4/MIP-1-beta and RANTES and subsequently transduces a signal by increasing the intracellular calcium ion level. May play a role in the control of granulocytic lineage proliferation or differentiation. Participates in T-lymphocyte migration to the infection site by acting as a chemotactic receptor. The protein is C-C chemokine receptor type 5 (CCR5) of Trachypithecus francoisi (Francois' leaf monkey).